Reading from the N-terminus, the 323-residue chain is Mortality factor 4-like protein 1 (323 aa).

The Tudor-knot domain maps to glutamine 12–valine 62. Positions glutamine 77–threonine 143 are disordered. Residues proline 94–valine 227 are sufficient for interaction with SIN3A. An N6-acetyllysine modification is found at lysine 104. The interaction with RB1-1 stretch occupies residues serine 125 to aspartate 191. The interval threonine 149–alanine 303 is sufficient for interaction with PHF12. The MRG domain occupies asparagine 152–valine 323. The interaction with RB1-2 stretch occupies residues leucine 284 to leucine 305.

As to quaternary structure, component of the NuA4 histone acetyltransferase complex which contains the catalytic subunit KAT5/TIP60 and the subunits EP400, TRRAP/PAF400, BRD8/SMAP, EPC1, DMAP1/DNMAP1, RUVBL1/TIP49, RUVBL2, ING3, actin, ACTL6A/BAF53A, MORF4L1/MRG15, MORF4L2/MRGX, MRGBP, YEATS4/GAS41, VPS72/YL1 and MEAF6. The NuA4 complex interacts with MYC and the adenovirus E1A protein. MORF4L1 may also participate in the formation of NuA4 related complexes which lack the KAT5/TIP60 catalytic subunit, but which include the SWI/SNF related protein SRCAP. Component of the mSin3A histone deacetylase complex, which includes SIN3A, HDAC2, ARID4B, MORF4L1, RBBP4/RbAp48, and RBBP7/RbAp46. May also interact with PHF12 and one or more as yet undefined members of the TLE (transducin-like enhancer of split) family of transcriptional repressors. Component of the SIN3B complex, which includes SIN3B, HDAC2 or HDAC1, PHF12 and MORF4L1. Interacts with RB1 and KAT8. Interacts with the N-terminus of MRFAP1. Found in a complex composed of MORF4L1, MRFAP1 and RB1. Interacts with the entire BRCA complex, which contains BRCA1, PALB2, BRCA2 and RAD51. Interacts with PALB2. Forms a complex with MSL1 and NUPR1.

The protein localises to the nucleus. In terms of biological role, component of the NuA4 histone acetyltransferase (HAT) complex which is involved in transcriptional activation of select genes principally by acetylation of nucleosomal histones H4 and H2A. This modification may both alter nucleosome - DNA interactions and promote interaction of the modified histones with other proteins which positively regulate transcription. This complex may be required for the activation of transcriptional programs associated with oncogene and proto-oncogene mediated growth induction, tumor suppressor mediated growth arrest and replicative senescence, apoptosis, and DNA repair. The NuA4 complex ATPase and helicase activities seem to be, at least in part, contributed by the association of RUVBL1 and RUVBL2 with EP400. NuA4 may also play a direct role in DNA repair when directly recruited to sites of DNA damage. As part of the SIN3B complex represses transcription and counteracts the histone acetyltransferase activity of EP300 through the recognition H3K27ac marks by PHF12 and the activity of the histone deacetylase HDAC2. SIN3B complex is recruited downstream of the constitutively active genes transcriptional start sites through interaction with histones and mitigates histone acetylation and RNA polymerase II progression within transcribed regions contributing to the regulation of transcription. Required for homologous recombination repair (HRR) and resistance to mitomycin C (MMC). Involved in the localization of PALB2, BRCA2 and RAD51, but not BRCA1, to DNA-damage foci. The polypeptide is Mortality factor 4-like protein 1 (Morf4l1) (Rattus norvegicus (Rat)).